The sequence spans 569 residues: Ferredoxin--nitrite reductase, chloroplastic (569 aa).

Residues 1-4 (IPGR) constitute a chloroplast transit peptide. The interval 1 to 28 (IPGRTGRARAAVSVPPPAGEQVPTERLE) is disordered. [4Fe-4S] cluster contacts are provided by Cys-447, Cys-453, Cys-488, and Cys-492. Cys-492 is a binding site for siroheme.

This sequence belongs to the nitrite and sulfite reductase 4Fe-4S domain family. As to quaternary structure, monomer. The cofactor is siroheme. [4Fe-4S] cluster is required as a cofactor.

The protein localises to the plastid. The protein resides in the chloroplast. The catalysed reaction is 6 oxidized [2Fe-2S]-[ferredoxin] + NH4(+) + 2 H2O = nitrite + 6 reduced [2Fe-2S]-[ferredoxin] + 8 H(+). It participates in nitrogen metabolism; nitrate reduction (assimilation). The chain is Ferredoxin--nitrite reductase, chloroplastic (NIR) from Zea mays (Maize).